The following is a 283-amino-acid chain: Polyamine aminopropyltransferase (283 aa).

One can recognise a PABS domain in the interval 5–241; the sequence is NNWYIEHFER…GWWSVTLARK (237 aa). Gln35 contacts S-methyl-5'-thioadenosine. Residues His66 and Asp90 each coordinate spermidine. S-methyl-5'-thioadenosine-binding positions include Asp110 and 141–142; that span reads DG. The Proton acceptor role is filled by Asp160. 160–163 is a spermidine binding site; the sequence is DSTD. Pro167 is an S-methyl-5'-thioadenosine binding site.

It belongs to the spermidine/spermine synthase family. As to quaternary structure, homodimer or homotetramer.

It localises to the cytoplasm. The catalysed reaction is S-adenosyl 3-(methylsulfanyl)propylamine + putrescine = S-methyl-5'-thioadenosine + spermidine + H(+). Its pathway is amine and polyamine biosynthesis; spermidine biosynthesis; spermidine from putrescine: step 1/1. Functionally, catalyzes the irreversible transfer of a propylamine group from the amino donor S-adenosylmethioninamine (decarboxy-AdoMet) to putrescine (1,4-diaminobutane) to yield spermidine. This Stenotrophomonas maltophilia (strain R551-3) protein is Polyamine aminopropyltransferase.